The following is a 213-amino-acid chain: MSETAPVAQAASTATEKPAAAKKTKKPAKAAAPRKKPAGPSVSELIVQAVSSSKERSGVSLAALKKSLAAAGYDVEKNNSRIKLGLKSLVNKGTLVQTKGTGAAGSFKLNKKAESKAITTKVSVKAKASGAAKKPKKTAGAAAKKTVKTPKKPKKPAVSKKTSKSPKKPKVVKAKKVAKSPAKAKAVKPKASKAKVTKPKTPAKPKKAAPKKK.

The tract at residues 1–43 (MSETAPVAQAASTATEKPAAAKKTKKPAKAAAPRKKPAGPSVS) is disordered. S2 is modified (N-acetylserine). 2 positions are modified to phosphoserine: S2 and S12. The span at 8–18 (AQAASTATEKP) shows a compositional bias: low complexity. K17 carries the post-translational modification N6-acetyllysine. Basic residues predominate over residues 20-37 (AAKKTKKPAKAAAPRKKP). Position 36 is an N6-(beta-hydroxybutyryl)lysine (K36). The 74-residue stretch at 38 to 111 (AGPSVSELIV…GAAGSFKLNK (74 aa)) folds into the H15 domain. Phosphoserine is present on S43. K54 is modified (N6-(beta-hydroxybutyryl)lysine). R56 carries the citrulline modification. K66 carries the post-translational modification N6-(beta-hydroxybutyryl)lysine. At S67 the chain carries Phosphoserine. An N6-acetyllysine modification is found at K77. K87 is modified (N6-(beta-hydroxybutyryl)lysine). K92 carries the post-translational modification N6-(beta-hydroxybutyryl)lysine; alternate. K92 is modified (N6-acetyllysine; alternate). S106 is subject to Phosphoserine. K108 carries the N6-(beta-hydroxybutyryl)lysine modification. Residues 112 to 213 (KAESKAITTK…KPKKAAPKKK (102 aa)) are disordered. The segment covering 120-144 (TKVSVKAKASGAAKKPKKTAGAAAK) has biased composition (low complexity). K121 is subject to N6-acetyllysine. Basic residues-rich tracts occupy residues 145 to 178 (KTVKTPKKPKKPAVSKKTSKSPKKPKVVKAKKVA) and 185 to 213 (KAVKPKASKAKVTKPKTPAKPKKAAPKKK). T201 is modified (phosphothreonine).

Belongs to the histone H1/H5 family. Interacts with DFFB. In terms of processing, H1 histones are progressively phosphorylated during the cell cycle, becoming maximally phosphorylated during late G2 phase and M phase, and being dephosphorylated sharply thereafter. Post-translationally, citrullination at Arg-56 (H1R54ci) by PADI4 takes place within the DNA-binding site of H1 and results in its displacement from chromatin and global chromatin decondensation, thereby promoting pluripotency and stem cell maintenance. Hydroxybutyrylation of histones is induced by starvation. As to expression, restricted to thymus, testis and spleen. Present also in lymphocytic and neuronal cells. Increases in testis starting with a low level at day 5 and reaching high concentrations in 20-day old and adult animals.

The protein resides in the nucleus. Its subcellular location is the chromosome. In terms of biological role, histone H1 protein binds to linker DNA between nucleosomes forming the macromolecular structure known as the chromatin fiber. Histones H1 are necessary for the condensation of nucleosome chains into higher-order structured fibers. Also acts as a regulator of individual gene transcription through chromatin remodeling, nucleosome spacing and DNA methylation. The sequence is that of Histone H1.1 from Mus musculus (Mouse).